A 242-amino-acid chain; its full sequence is ATP synthase subunit a, organellar chromatophore (242 aa).

5 helical membrane-spanning segments follow: residues 28–48 (LHGQ…VLVI), 89–109 (LPFI…GALV), 128–148 (INTT…AGLS), 193–213 (LVVG…AMFL), and 214–234 (GLFT…NYIG).

The protein belongs to the ATPase A chain family. As to quaternary structure, F-type ATPases have 2 components, CF(1) - the catalytic core - and CF(0) - the membrane proton channel. CF(1) has five subunits: alpha(3), beta(3), gamma(1), delta(1), epsilon(1). CF(0) has four main subunits: a, b, b' and c.

The protein localises to the plastid. It localises to the organellar chromatophore thylakoid membrane. Its function is as follows. Key component of the proton channel; it plays a direct role in the translocation of protons across the membrane. The chain is ATP synthase subunit a, organellar chromatophore from Paulinella chromatophora.